The following is a 341-amino-acid chain: Ketol-acid reductoisomerase (NADP(+)) (341 aa).

One can recognise a KARI N-terminal Rossmann domain in the interval 1-182 (MTELFYDDDA…GGTRAGVIKT (182 aa)). Residues 25–28 (YGSQ), S51, S53, and 83–86 (DQVQ) each bind NADP(+). The active site involves H108. G134 contributes to the NADP(+) binding site. The KARI C-terminal knotted domain occupies 183-328 (TFTEETETDL…RELRKLFSWI (146 aa)). 4 residues coordinate Mg(2+): D191, E195, E227, and E231. Position 252 (S252) interacts with substrate.

This sequence belongs to the ketol-acid reductoisomerase family. Mg(2+) serves as cofactor.

It carries out the reaction (2R)-2,3-dihydroxy-3-methylbutanoate + NADP(+) = (2S)-2-acetolactate + NADPH + H(+). The catalysed reaction is (2R,3R)-2,3-dihydroxy-3-methylpentanoate + NADP(+) = (S)-2-ethyl-2-hydroxy-3-oxobutanoate + NADPH + H(+). It functions in the pathway amino-acid biosynthesis; L-isoleucine biosynthesis; L-isoleucine from 2-oxobutanoate: step 2/4. The protein operates within amino-acid biosynthesis; L-valine biosynthesis; L-valine from pyruvate: step 2/4. In terms of biological role, involved in the biosynthesis of branched-chain amino acids (BCAA). Catalyzes an alkyl-migration followed by a ketol-acid reduction of (S)-2-acetolactate (S2AL) to yield (R)-2,3-dihydroxy-isovalerate. In the isomerase reaction, S2AL is rearranged via a Mg-dependent methyl migration to produce 3-hydroxy-3-methyl-2-ketobutyrate (HMKB). In the reductase reaction, this 2-ketoacid undergoes a metal-dependent reduction by NADPH to yield (R)-2,3-dihydroxy-isovalerate. The sequence is that of Ketol-acid reductoisomerase (NADP(+)) from Renibacterium salmoninarum (strain ATCC 33209 / DSM 20767 / JCM 11484 / NBRC 15589 / NCIMB 2235).